Here is a 463-residue protein sequence, read N- to C-terminus: Phosphomannomutase/phosphoglucomutase (463 aa).

Tyr17 is a binding site for alpha-D-glucose 1-phosphate. Residue Tyr17 coordinates alpha-D-mannose 1-phosphate. Ser108 serves as the catalytic Non-phosphorylated intermediate. Mg(2+) contacts are provided by Ser108, Asp242, Asp244, and Asp246. Ser108 is subject to Phosphoserine. Alpha-D-glucose 1-phosphate contacts are provided by residues Lys285, His308, 325–329 (EMSGH), and 421–425 (RASNT). Alpha-D-mannose 1-phosphate-binding positions include His308, 325 to 329 (EMSGH), and 421 to 425 (RASNT).

This sequence belongs to the phosphohexose mutase family. In terms of assembly, monomer. It depends on Mg(2+) as a cofactor.

The catalysed reaction is alpha-D-mannose 1-phosphate = D-mannose 6-phosphate. The enzyme catalyses alpha-D-glucose 1-phosphate = alpha-D-glucose 6-phosphate. Its pathway is nucleotide-sugar biosynthesis; GDP-alpha-D-mannose biosynthesis; alpha-D-mannose 1-phosphate from D-fructose 6-phosphate: step 2/2. It functions in the pathway bacterial outer membrane biogenesis; lipopolysaccharide biosynthesis. In terms of biological role, highly reversible phosphoryltransferase. The phosphomannomutase activity produces a precursor for alginate polymerization, the alginate layer causes a mucoid phenotype and provides a protective barrier against host immune defenses and antibiotics. Also involved in core lipopolysaccaride (LPS) biosynthesis due to its phosphoglucomutase activity. Essential for rhamnolipid production, an exoproduct correlated with pathogenicity. Required for biofilm production. The reaction proceeds via 2 processive phosphoryl transferase reactions; first from enzyme-phospho-Ser-108 to the substrate (generating a bisphosphorylated substrate intermediate and a dephosphorylated enzyme), a 180 degree rotation of the intermediate (probably aided by movement of domain 4), and subsequent transfer of phosphate back to the enzyme. The polypeptide is Phosphomannomutase/phosphoglucomutase (algC) (Pseudomonas aeruginosa (strain UCBPP-PA14)).